We begin with the raw amino-acid sequence, 242 residues long: uncharacterized protein (242 aa).

8–15 serves as a coordination point for NADP(+); that stretch reads TGASGGIG. S137 lines the substrate pocket. The Proton acceptor role is filled by Y150.

This sequence belongs to the short-chain dehydrogenases/reductases (SDR) family.

This is an uncharacterized protein from Bacillus subtilis (strain 168).